A 320-amino-acid chain; its full sequence is Lipoyl synthase (320 aa).

[4Fe-4S] cluster contacts are provided by C67, C72, C78, C93, C97, C100, and S307. The Radical SAM core domain occupies 79–296; sequence FNHGTATFMI…RTKAEVMGFE (218 aa).

The protein belongs to the radical SAM superfamily. Lipoyl synthase family. It depends on [4Fe-4S] cluster as a cofactor.

Its subcellular location is the cytoplasm. It carries out the reaction [[Fe-S] cluster scaffold protein carrying a second [4Fe-4S](2+) cluster] + N(6)-octanoyl-L-lysyl-[protein] + 2 oxidized [2Fe-2S]-[ferredoxin] + 2 S-adenosyl-L-methionine + 4 H(+) = [[Fe-S] cluster scaffold protein] + N(6)-[(R)-dihydrolipoyl]-L-lysyl-[protein] + 4 Fe(3+) + 2 hydrogen sulfide + 2 5'-deoxyadenosine + 2 L-methionine + 2 reduced [2Fe-2S]-[ferredoxin]. The protein operates within protein modification; protein lipoylation via endogenous pathway; protein N(6)-(lipoyl)lysine from octanoyl-[acyl-carrier-protein]: step 2/2. Catalyzes the radical-mediated insertion of two sulfur atoms into the C-6 and C-8 positions of the octanoyl moiety bound to the lipoyl domains of lipoate-dependent enzymes, thereby converting the octanoylated domains into lipoylated derivatives. The polypeptide is Lipoyl synthase (Mannheimia succiniciproducens (strain KCTC 0769BP / MBEL55E)).